The sequence spans 205 residues: Large ribosomal subunit protein uL10 (205 aa).

The disordered stretch occupies residues 167–205; that stretch reads AQGAAPAEAKAEAPASEEKAADTPAEQPAESAPEAAPEA. Composition is skewed to low complexity over residues 169-180 and 190-205; these read GAAPAEAKAEAP and PAEQPAESAPEAAPEA.

It belongs to the universal ribosomal protein uL10 family. Part of the ribosomal stalk of the 50S ribosomal subunit. The N-terminus interacts with L11 and the large rRNA to form the base of the stalk. The C-terminus forms an elongated spine to which L12 dimers bind in a sequential fashion forming a multimeric L10(L12)X complex.

Functionally, forms part of the ribosomal stalk, playing a central role in the interaction of the ribosome with GTP-bound translation factors. This is Large ribosomal subunit protein uL10 from Treponema denticola (strain ATCC 35405 / DSM 14222 / CIP 103919 / JCM 8153 / KCTC 15104).